Reading from the N-terminus, the 213-residue chain is Orotate phosphoribosyltransferase (213 aa).

Lysine 26 contacts 5-phospho-alpha-D-ribose 1-diphosphate. 34–35 (FF) contacts orotate. 5-phospho-alpha-D-ribose 1-diphosphate-binding positions include 72–73 (YK), arginine 99, lysine 100, lysine 103, histidine 105, and 124–132 (DDVITAGTA). 2 residues coordinate orotate: threonine 128 and arginine 156.

Belongs to the purine/pyrimidine phosphoribosyltransferase family. PyrE subfamily. In terms of assembly, homodimer. Mg(2+) is required as a cofactor.

The catalysed reaction is orotidine 5'-phosphate + diphosphate = orotate + 5-phospho-alpha-D-ribose 1-diphosphate. Its pathway is pyrimidine metabolism; UMP biosynthesis via de novo pathway; UMP from orotate: step 1/2. Functionally, catalyzes the transfer of a ribosyl phosphate group from 5-phosphoribose 1-diphosphate to orotate, leading to the formation of orotidine monophosphate (OMP). The protein is Orotate phosphoribosyltransferase of Saccharophagus degradans (strain 2-40 / ATCC 43961 / DSM 17024).